Reading from the N-terminus, the 357-residue chain is Arginine kinase (357 aa).

Positions Lys9–Gly91 constitute a Phosphagen kinase N-terminal domain. Gly64–Tyr68 contributes to the substrate binding site. Residues Phe119 to Ala356 form the Phosphagen kinase C-terminal domain. ATP is bound by residues Ser122 to Arg126 and His185. Residue Glu225 participates in substrate binding. Residue Arg229 participates in ATP binding. Cys271 provides a ligand contact to substrate. ATP contacts are provided by residues Arg280 to His284 and Arg309 to Glu314. Residue Glu314 coordinates substrate.

It belongs to the ATP:guanido phosphotransferase family. Monomer.

The protein resides in the cytoplasm. The enzyme catalyses L-arginine + ATP = N(omega)-phospho-L-arginine + ADP + H(+). Its function is as follows. Catalyzes the reversible transfer of the terminal phosphoryl group of ATP to L-arginine. The protein is Arginine kinase of Limulus polyphemus (Atlantic horseshoe crab).